The chain runs to 161 residues: Cyclic pyranopterin monophosphate synthase (161 aa).

Substrate-binding positions include 78–80 and 116–117; these read LCH and ME. Residue D131 is part of the active site.

It belongs to the MoaC family. As to quaternary structure, homohexamer; trimer of dimers.

The catalysed reaction is (8S)-3',8-cyclo-7,8-dihydroguanosine 5'-triphosphate = cyclic pyranopterin phosphate + diphosphate. Its pathway is cofactor biosynthesis; molybdopterin biosynthesis. Functionally, catalyzes the conversion of (8S)-3',8-cyclo-7,8-dihydroguanosine 5'-triphosphate to cyclic pyranopterin monophosphate (cPMP). The sequence is that of Cyclic pyranopterin monophosphate synthase from Bordetella pertussis (strain Tohama I / ATCC BAA-589 / NCTC 13251).